The chain runs to 122 residues: Large ribosomal subunit protein uL14 (122 aa).

The protein belongs to the universal ribosomal protein uL14 family. Part of the 50S ribosomal subunit. Forms a cluster with proteins L3 and L19. In the 70S ribosome, L14 and L19 interact and together make contacts with the 16S rRNA in bridges B5 and B8.

Functionally, binds to 23S rRNA. Forms part of two intersubunit bridges in the 70S ribosome. The polypeptide is Large ribosomal subunit protein uL14 (Pseudoalteromonas translucida (strain TAC 125)).